Consider the following 176-residue polypeptide: ATP synthase subunit b, chloroplastic (176 aa).

Residues 27–49 (ILNLAAVFALLAYVGTDFVSSLL) form a helical membrane-spanning segment.

The protein belongs to the ATPase B chain family. As to quaternary structure, F-type ATPases have 2 components, F(1) - the catalytic core - and F(0) - the membrane proton channel. F(1) has five subunits: alpha(3), beta(3), gamma(1), delta(1), epsilon(1). F(0) has four main subunits: a(1), b(1), b'(1) and c(10-14). The alpha and beta chains form an alternating ring which encloses part of the gamma chain. F(1) is attached to F(0) by a central stalk formed by the gamma and epsilon chains, while a peripheral stalk is formed by the delta, b and b' chains.

The protein localises to the plastid. The protein resides in the chloroplast thylakoid membrane. Functionally, f(1)F(0) ATP synthase produces ATP from ADP in the presence of a proton or sodium gradient. F-type ATPases consist of two structural domains, F(1) containing the extramembraneous catalytic core and F(0) containing the membrane proton channel, linked together by a central stalk and a peripheral stalk. During catalysis, ATP synthesis in the catalytic domain of F(1) is coupled via a rotary mechanism of the central stalk subunits to proton translocation. In terms of biological role, component of the F(0) channel, it forms part of the peripheral stalk, linking F(1) to F(0). This Nephroselmis olivacea (Green alga) protein is ATP synthase subunit b, chloroplastic.